We begin with the raw amino-acid sequence, 784 residues long: Cas scaffolding protein family member 4 (784 aa).

The SH3 domain occupies 11 to 73 (PKALLARALY…PANRLQILEE (63 aa)). A phosphoserine mark is found at Ser-197, Ser-246, Ser-302, Ser-373, and Ser-387. The tract at residues 343–376 (TPNIYDVPRAMPDVPQAGKELGKAGGPSENSVDH) is disordered. Positions 466–536 (RDSLEANIDA…LLETKERLES (71 aa)) form a coiled coil. Residues 614 to 635 (KEGESYQRKAPFQKQRASEQPP) are disordered.

This sequence belongs to the CAS family. In terms of assembly, interacts (via SH3 domain) with PTK2/FAK1 (via C-terminus). Post-translationally, phosphorylated on tyrosines by SRC.

The protein localises to the cytoplasm. Its subcellular location is the cytoskeleton. It localises to the cell junction. It is found in the focal adhesion. Docking protein that plays a role in tyrosine kinase-based signaling related to cell adhesion and cell spreading. Regulates PTK2/FAK1 activity, focal adhesion integrity, and cell spreading. In Sus scrofa (Pig), this protein is Cas scaffolding protein family member 4.